The chain runs to 335 residues: Pregnancy-specific beta-1-glycoprotein 5 (335 aa).

Residues Met-1–Ala-34 form the signal peptide. The Ig-like V-type domain maps to Gln-35–Leu-144. Residues Asn-104 and Asn-111 are each glycosylated (N-linked (GlcNAc...) asparagine). A Cell attachment site motif is present at residues Arg-127–Asp-129. Ig-like C2-type domains lie at Pro-147 to Asn-234 and Pro-239 to Thr-317. 2 disulfide bridges follow: Cys-169/Cys-217 and Cys-261/Cys-301. Asn-175 and Asn-210 each carry an N-linked (GlcNAc...) asparagine glycan.

Belongs to the immunoglobulin superfamily. CEA family. In terms of tissue distribution, synthesized by syncytiotrophoblast of the placenta.

Its subcellular location is the secreted. This chain is Pregnancy-specific beta-1-glycoprotein 5 (PSG5), found in Homo sapiens (Human).